The chain runs to 530 residues: Tetrahydroberberine oxidase (530 aa).

The N-terminal stretch at 1-24 (MSKMASSIFATFSLLSSLLPTSLA) is a signal peptide. Cys-36 and Cys-94 are disulfide-bonded. A glycan (N-linked (GlcNAc...) asparagine) is linked at Asn-51. The FAD-binding PCMH-type domain maps to 72–246 (TTPKPNFIVT…LAWKIRLVPV (175 aa)). Positions 109-171 (HDFEGLSYVS…GVHAFPAGLC (63 aa)) form a cross-link, 6-(S-cysteinyl)-8alpha-(pros-histidyl)-FAD (His-Cys). Asn-483 carries an N-linked (GlcNAc...) asparagine glycan.

Belongs to the oxygen-dependent FAD-linked oxidoreductase family. The cofactor is FAD. The FAD cofactor is bound via a bicovalent 6-S-cysteinyl, 8alpha-N1-histidyl FAD linkage.

It carries out the reaction (S)-canadine + 2 O2 + H(+) = berberine + 2 H2O2. In terms of biological role, catalyzes the oxidation of different tetrahydroprotoberberines, such as (S)-canadine, (S)-scoulerine and (S)-corypalmine. Catalyzes the oxidation of (S)-coreximine and (S)-tetrahydropalmatine. Catalyzes the oxidation of different 1-benzylisoquinoline alkaloids, such as (S)-norreticuline, (S)-nororientaline, (S)-coclaurine and (S)-norisoorientaline. Exhibits strict specificity for the (S)-enantiomer of tetrahydroprotoberbirines and 1-benzylisoquinoline alkaloids. This is Tetrahydroberberine oxidase from Berberis wilsoniae (Mrs Wilson's barberry).